Here is a 155-residue protein sequence, read N- to C-terminus: D-aminoacyl-tRNA deacylase (155 aa).

Residues Gly137–Pro138 carry the Gly-cisPro motif, important for rejection of L-amino acids motif.

Belongs to the DTD family. Homodimer.

Its subcellular location is the cytoplasm. It carries out the reaction glycyl-tRNA(Ala) + H2O = tRNA(Ala) + glycine + H(+). It catalyses the reaction a D-aminoacyl-tRNA + H2O = a tRNA + a D-alpha-amino acid + H(+). Its function is as follows. An aminoacyl-tRNA editing enzyme that deacylates mischarged D-aminoacyl-tRNAs. Also deacylates mischarged glycyl-tRNA(Ala), protecting cells against glycine mischarging by AlaRS. Acts via tRNA-based rather than protein-based catalysis; rejects L-amino acids rather than detecting D-amino acids in the active site. By recycling D-aminoacyl-tRNA to D-amino acids and free tRNA molecules, this enzyme counteracts the toxicity associated with the formation of D-aminoacyl-tRNA entities in vivo and helps enforce protein L-homochirality. In Nitrosococcus oceani (strain ATCC 19707 / BCRC 17464 / JCM 30415 / NCIMB 11848 / C-107), this protein is D-aminoacyl-tRNA deacylase.